Consider the following 288-residue polypeptide: NAD kinase (288 aa).

Residue D68 is the Proton acceptor of the active site. NAD(+) contacts are provided by residues 68 to 69 (DG), 142 to 143 (ND), R153, D172, and Q242.

It belongs to the NAD kinase family. A divalent metal cation serves as cofactor.

It localises to the cytoplasm. The enzyme catalyses NAD(+) + ATP = ADP + NADP(+) + H(+). In terms of biological role, involved in the regulation of the intracellular balance of NAD and NADP, and is a key enzyme in the biosynthesis of NADP. Catalyzes specifically the phosphorylation on 2'-hydroxyl of the adenosine moiety of NAD to yield NADP. The chain is NAD kinase from Desulforamulus reducens (strain ATCC BAA-1160 / DSM 100696 / MI-1) (Desulfotomaculum reducens).